Here is a 281-residue protein sequence, read N- to C-terminus: Energy-coupling factor transporter ATP-binding protein EcfA1 (281 aa).

Positions 6 to 242 (IDVKHLDYRY…GEALIKMGLD (237 aa)) constitute an ABC transporter domain. Residue 42–49 (GHNGSGKS) participates in ATP binding.

This sequence belongs to the ABC transporter superfamily. Energy-coupling factor EcfA family. In terms of assembly, forms a stable energy-coupling factor (ECF) transporter complex composed of 2 membrane-embedded substrate-binding proteins (S component), 2 ATP-binding proteins (A component) and 2 transmembrane proteins (T component).

The protein resides in the cell membrane. Its function is as follows. ATP-binding (A) component of a common energy-coupling factor (ECF) ABC-transporter complex. Unlike classic ABC transporters this ECF transporter provides the energy necessary to transport a number of different substrates. This is Energy-coupling factor transporter ATP-binding protein EcfA1 from Lactiplantibacillus plantarum (strain ATCC BAA-793 / NCIMB 8826 / WCFS1) (Lactobacillus plantarum).